The chain runs to 75 residues: Small ribosomal subunit protein bS18 (75 aa).

Belongs to the bacterial ribosomal protein bS18 family. As to quaternary structure, part of the 30S ribosomal subunit. Forms a tight heterodimer with protein bS6.

In terms of biological role, binds as a heterodimer with protein bS6 to the central domain of the 16S rRNA, where it helps stabilize the platform of the 30S subunit. This chain is Small ribosomal subunit protein bS18, found in Cereibacter sphaeroides (strain ATCC 17029 / ATH 2.4.9) (Rhodobacter sphaeroides).